Here is a 459-residue protein sequence, read N- to C-terminus: 3-carboxy-cis,cis-muconate cycloisomerase (459 aa).

It belongs to the class-II fumarase/aspartase family. Homotetramer.

The protein resides in the cytoplasm. The enzyme catalyses 2-(carboxymethyl)-5-oxo-2,5-dihydro-2-furoate = 3-carboxy-cis,cis-muconate + H(+). Its pathway is aromatic compound metabolism; beta-ketoadipate pathway; 5-oxo-4,5-dihydro-2-furylacetate from 3-carboxy-cis,cis-muconate: step 1/2. Its function is as follows. Catalyzes an anti cycloisomerization. The sequence is that of 3-carboxy-cis,cis-muconate cycloisomerase (pcaB) from Pseudomonas aeruginosa (strain ATCC 15692 / DSM 22644 / CIP 104116 / JCM 14847 / LMG 12228 / 1C / PRS 101 / PAO1).